The following is a 156-amino-acid chain: Cyanate hydratase (156 aa).

Active-site residues include R96, E99, and S122.

The protein belongs to the cyanase family.

The enzyme catalyses cyanate + hydrogencarbonate + 3 H(+) = NH4(+) + 2 CO2. In terms of biological role, catalyzes the reaction of cyanate with bicarbonate to produce ammonia and carbon dioxide. The polypeptide is Cyanate hydratase (Burkholderia ambifaria (strain MC40-6)).